Reading from the N-terminus, the 308-residue chain is Homeobox protein HMX3 (308 aa).

Disordered stretches follow at residues 1–57 and 107–184; these read MPET…GFAL and AEKS…KKKT. Positions 9 to 19 are enriched in pro residues; it reads PSAPPPPPPPK. Basic and acidic residues-rich tracts occupy residues 135 to 144 and 156 to 177; these read AEQKERDPKS and EEGKKEGGAEDWKKREESPEKK. The segment at residues 181-240 is a DNA-binding region (homeobox); sequence KKKTRTVFSRSQVFQLESTFDMKRYLSSSERAGLAASLHLTETQVKIWFQNRRNKWKRQL.

The protein belongs to the HMX homeobox family.

It is found in the nucleus. In terms of biological role, transcription factor involved in specification of neuronal cell types and which is required for inner ear and hypothalamus development. Binds to the 5'-CAAGTG-3' core sequence. The protein is Homeobox protein HMX3 (HMX3) of Gallus gallus (Chicken).